The sequence spans 264 residues: Thymidylate synthase (264 aa).

Position 21 (arginine 21) interacts with dUMP. Residue histidine 51 coordinates (6R)-5,10-methylene-5,6,7,8-tetrahydrofolate. A dUMP-binding site is contributed by 126–127; that stretch reads RR. The Nucleophile role is filled by cysteine 146. Residues 166–169, asparagine 177, and 207–209 each bind dUMP; these read RSCD and HLY. (6R)-5,10-methylene-5,6,7,8-tetrahydrofolate is bound at residue aspartate 169. Alanine 263 serves as a coordination point for (6R)-5,10-methylene-5,6,7,8-tetrahydrofolate.

This sequence belongs to the thymidylate synthase family. Bacterial-type ThyA subfamily. As to quaternary structure, homodimer.

The protein localises to the cytoplasm. It catalyses the reaction dUMP + (6R)-5,10-methylene-5,6,7,8-tetrahydrofolate = 7,8-dihydrofolate + dTMP. It participates in pyrimidine metabolism; dTTP biosynthesis. In terms of biological role, catalyzes the reductive methylation of 2'-deoxyuridine-5'-monophosphate (dUMP) to 2'-deoxythymidine-5'-monophosphate (dTMP) while utilizing 5,10-methylenetetrahydrofolate (mTHF) as the methyl donor and reductant in the reaction, yielding dihydrofolate (DHF) as a by-product. This enzymatic reaction provides an intracellular de novo source of dTMP, an essential precursor for DNA biosynthesis. This chain is Thymidylate synthase, found in Yersinia pseudotuberculosis serotype O:1b (strain IP 31758).